Reading from the N-terminus, the 225-residue chain is Urease accessory protein UreF (225 aa).

This sequence belongs to the UreF family. As to quaternary structure, ureD, UreF and UreG form a complex that acts as a GTP-hydrolysis-dependent molecular chaperone, activating the urease apoprotein by helping to assemble the nickel containing metallocenter of UreC. The UreE protein probably delivers the nickel.

Its subcellular location is the cytoplasm. In terms of biological role, required for maturation of urease via the functional incorporation of the urease nickel metallocenter. This chain is Urease accessory protein UreF, found in Picosynechococcus sp. (strain ATCC 27264 / PCC 7002 / PR-6) (Agmenellum quadruplicatum).